Consider the following 426-residue polypeptide: Peptidoglycan DD-endopeptidase ShyB (426 aa).

The first 21 residues, 1–21, serve as a signal peptide directing secretion; it reads MGQFRFLALIVAVLCFSVALF. Residues 32–48 show a composition bias toward polar residues; sequence SYSVPLNQSVNTSQPPS. Positions 32–55 are disordered; sequence SYSVPLNQSVNTSQPPSSEMVPSD. H291, D295, and H372 together coordinate Zn(2+).

Belongs to the peptidase M23B family. In terms of assembly, monomer. Zn(2+) serves as cofactor.

It localises to the periplasm. It participates in cell wall degradation; peptidoglycan degradation. Its activity is regulated as follows. Not inhibited by metal chelator EDTA. Cell wall peptidoglycan (PG) DD-endopeptidase, which may act as a substitute for other zinc-dependent PG endopeptidases (ShyA and ShyC) during zinc starvation. Hydrolyzes peptide cross-links which covalently connect adjacent PG strands probably to allow insertion of new glycans and thus cell wall expansion. Degrades purified whole PG sacculi in vitro. It is unclear how it is able to function in low zinc environments, but that may possibly be due to binding zinc with very high affinity, utilizing an alternative metal cofactor or that it may function independently of a bound metal cofactor. The chain is Peptidoglycan DD-endopeptidase ShyB from Vibrio cholerae serotype O1 (strain ATCC 39315 / El Tor Inaba N16961).